A 203-amino-acid polypeptide reads, in one-letter code: Large ribosomal subunit protein eL15 (203 aa).

The tract at residues 160–186 (ESRGLTSTGKRSRGLNKGHRYNKTRAG) is disordered. Residues 169–186 (KRSRGLNKGHRYNKTRAG) show a composition bias toward basic residues.

The protein belongs to the eukaryotic ribosomal protein eL15 family. As to quaternary structure, component of the large ribosomal subunit (LSU). Mature N.crassa ribosomes consist of a small (40S) and a large (60S) subunit. The 40S small subunit contains 1 molecule of ribosomal RNA (18S rRNA) and at least 32 different proteins. The large 60S subunit contains 3 rRNA molecules (26S, 5.8S and 5S rRNA) and at least 42 different proteins.

The protein resides in the cytoplasm. Its function is as follows. Component of the ribosome, a large ribonucleoprotein complex responsible for the synthesis of proteins in the cell. The small ribosomal subunit (SSU) binds messenger RNAs (mRNAs) and translates the encoded message by selecting cognate aminoacyl-transfer RNA (tRNA) molecules. The large subunit (LSU) contains the ribosomal catalytic site termed the peptidyl transferase center (PTC), which catalyzes the formation of peptide bonds, thereby polymerizing the amino acids delivered by tRNAs into a polypeptide chain. The nascent polypeptides leave the ribosome through a tunnel in the LSU and interact with protein factors that function in enzymatic processing, targeting, and the membrane insertion of nascent chains at the exit of the ribosomal tunnel. The protein is Large ribosomal subunit protein eL15 (rpl-15) of Neurospora crassa (strain ATCC 24698 / 74-OR23-1A / CBS 708.71 / DSM 1257 / FGSC 987).